The primary structure comprises 299 residues: Riboflavin transporter ImpX (299 aa).

2 EamA domains span residues 6 to 144 (KGAL…YLLT) and 162 to 294 (SLYS…SIIK). 10 consecutive transmembrane segments (helical) span residues 7–27 (GALL…ALTP), 34–54 (VPFV…ILFG), 68–88 (DLFF…LCIV), 101–121 (VVTL…RLLL), 129–149 (YLFW…EFHL), 158–178 (LLPA…ATVF), 202–222 (IMFV…ATAG), 224–244 (WLIF…LYYF), 253–273 (VATM…YLIN), and 276–296 (VLSP…IKIS).

Belongs to the EamA transporter family.

Its subcellular location is the cell membrane. In terms of biological role, transports riboflavin into the cell. This is Riboflavin transporter ImpX from Fusobacterium nucleatum subsp. nucleatum (strain ATCC 23726 / VPI 4351).